The chain runs to 455 residues: Bifunctional protein GlmU (455 aa).

A pyrophosphorylase region spans residues 1–226; the sequence is MSLDIVILAA…PMEVQGANDR (226 aa). Residues 8 to 11, lysine 22, glutamine 73, 78 to 79, 99 to 101, glycine 136, glutamate 151, asparagine 166, and asparagine 224 contribute to the UDP-N-acetyl-alpha-D-glucosamine site; these read LAAG, GT, and YGD. Position 101 (aspartate 101) interacts with Mg(2+). Asparagine 224 serves as a coordination point for Mg(2+). Residues 227-247 are linker; that stretch reads RQLSELERHYQLREGRRLMAQ. The interval 248–455 is N-acetyltransferase; the sequence is GVTLRDPARF…WKRPEKIKKS (208 aa). UDP-N-acetyl-alpha-D-glucosamine contacts are provided by arginine 330 and lysine 348. The Proton acceptor role is filled by histidine 360. 2 residues coordinate UDP-N-acetyl-alpha-D-glucosamine: tyrosine 363 and asparagine 374. Residues alanine 377, 383–384, serine 402, alanine 420, and arginine 437 each bind acetyl-CoA; that span reads NY.

This sequence in the N-terminal section; belongs to the N-acetylglucosamine-1-phosphate uridyltransferase family. The protein in the C-terminal section; belongs to the transferase hexapeptide repeat family. In terms of assembly, homotrimer. The cofactor is Mg(2+).

The protein resides in the cytoplasm. It catalyses the reaction alpha-D-glucosamine 1-phosphate + acetyl-CoA = N-acetyl-alpha-D-glucosamine 1-phosphate + CoA + H(+). The catalysed reaction is N-acetyl-alpha-D-glucosamine 1-phosphate + UTP + H(+) = UDP-N-acetyl-alpha-D-glucosamine + diphosphate. The protein operates within nucleotide-sugar biosynthesis; UDP-N-acetyl-alpha-D-glucosamine biosynthesis; N-acetyl-alpha-D-glucosamine 1-phosphate from alpha-D-glucosamine 6-phosphate (route II): step 2/2. It participates in nucleotide-sugar biosynthesis; UDP-N-acetyl-alpha-D-glucosamine biosynthesis; UDP-N-acetyl-alpha-D-glucosamine from N-acetyl-alpha-D-glucosamine 1-phosphate: step 1/1. Its pathway is bacterial outer membrane biogenesis; LPS lipid A biosynthesis. In terms of biological role, catalyzes the last two sequential reactions in the de novo biosynthetic pathway for UDP-N-acetylglucosamine (UDP-GlcNAc). The C-terminal domain catalyzes the transfer of acetyl group from acetyl coenzyme A to glucosamine-1-phosphate (GlcN-1-P) to produce N-acetylglucosamine-1-phosphate (GlcNAc-1-P), which is converted into UDP-GlcNAc by the transfer of uridine 5-monophosphate (from uridine 5-triphosphate), a reaction catalyzed by the N-terminal domain. This Pseudomonas entomophila (strain L48) protein is Bifunctional protein GlmU.